The following is a 348-amino-acid chain: 3',5'-cyclic-nucleotide phosphodiesterase (348 aa).

Mn(2+) serves as cofactor.

The catalysed reaction is a nucleoside 3',5'-cyclic phosphate + H2O = a nucleoside 5'-phosphate + H(+). Its function is as follows. Hydrolyzes cAMP to 5'-AMP and cGMP to 5'-GMP. Does not show phosphohydrolase activity toward various phosphatidylcholine and phosphorylated sugars. The protein is 3',5'-cyclic-nucleotide phosphodiesterase of Helicobacter pylori (strain ATCC 700392 / 26695) (Campylobacter pylori).